A 222-amino-acid polypeptide reads, in one-letter code: UPF0502 protein XCC4136 (222 aa).

This sequence belongs to the UPF0502 family.

The protein is UPF0502 protein XCC4136 of Xanthomonas campestris pv. campestris (strain ATCC 33913 / DSM 3586 / NCPPB 528 / LMG 568 / P 25).